We begin with the raw amino-acid sequence, 243 residues long: Transcription factor TFIIS homolog (243 aa).

Positions 77–201 (MRDIIQMMFF…SQQKVAEKTS (125 aa)) constitute a TFIIS central domain. The segment at 202–242 (QLYKCPNCKQRMCTYREVQTRALDEPSTIFCTCKKCGHEFI) adopts a TFIIS-type zinc-finger fold. C206, C209, C234, and C237 together coordinate Zn(2+).

It belongs to the TFS-II family.

Functionally, putative initiation factor. Necessary for efficient transcription elongation past template-encoded arresting sites. The sequence is that of Transcription factor TFIIS homolog from Ornithodoros (relapsing fever ticks).